Reading from the N-terminus, the 837-residue chain is GRIP1-associated protein 1 (837 aa).

A2 bears the N-acetylalanine mark. Positions 4 to 158 (ALSEEEFQRM…ALQERYGKEA (155 aa)) form a coiled coil. Disordered regions lie at residues 161-180 (PSAV…PISL), 555-577 (KGKE…ERDG), 647-666 (SEMN…VSSF), and 677-702 (SSAI…LSDE). The stretch at 204-637 (EQLQGLESSK…LQEILTNSKS (434 aa)) forms a coiled coil. The segment covering 648 to 666 (EMNSPSRTQTGDSSSVSSF) has biased composition (polar residues). 8 positions are modified to phosphoserine: S651, S662, S664, S665, S684, S686, S687, and S688. Low complexity predominate over residues 678–690 (SAIPARSLSSSPQ). 2 coiled-coil regions span residues 697–731 (AELS…LEVS) and 781–810 (DENL…KDME). A Phosphoserine modification is found at S826.

As to quaternary structure, interacts with GRIP1, GRIP2 and AMPA receptors. Interacts (via C-terminus) with MAPK8/JNK1 and with MAP3K1/MEKK1; the interaction promotes MAP3K1-mediated phosphorylation of MAPK8. Interacts (via N-terminus) with RAB4A (in GTP-bound form). Interacts (via C-terminus) with STX12. In terms of processing, proteolytically cleaved by caspase-3. A minor C-terminal proteolytic fragment of 30 kDa is produced. Proteolytic cleavage is required for JNK signaling activation. As to expression, expressed in the central nervous system; especially in neurons.

It localises to the early endosome membrane. It is found in the recycling endosome membrane. The protein resides in the cell projection. The protein localises to the axon. Its subcellular location is the dendrite. It localises to the synapse. In terms of biological role, regulates the endosomal recycling back to the neuronal plasma membrane, possibly by connecting early and late recycling endosomal domains and promoting segregation of recycling endosomes from early endosomal membranes. Involved in the localization of recycling endosomes to dendritic spines, thereby playing a role in the maintenance of dendritic spine morphology. Required for the activity-induced AMPA receptor recycling to dendrite membranes and for long-term potentiation and synaptic plasticity. Functions as a scaffold protein in neurons to facilitate MAP3K1/MEKK1-mediated activation of the JNK1 kinase by phosphorylation, possibly by bringing MAP3K1/MEKK1 and JNK1 in close proximity. The polypeptide is GRIP1-associated protein 1 (Gripap1) (Rattus norvegicus (Rat)).